The chain runs to 604 residues: Elongation factor 4 (604 aa).

The region spanning 7–189 is the tr-type G domain; that stretch reads KRIRNFCIIA…SVVDRVPPPA (183 aa). GTP is bound by residues 19-24 and 136-139; these read DHGKST and NKID.

This sequence belongs to the TRAFAC class translation factor GTPase superfamily. Classic translation factor GTPase family. LepA subfamily.

Its subcellular location is the cell inner membrane. It carries out the reaction GTP + H2O = GDP + phosphate + H(+). Required for accurate and efficient protein synthesis under certain stress conditions. May act as a fidelity factor of the translation reaction, by catalyzing a one-codon backward translocation of tRNAs on improperly translocated ribosomes. Back-translocation proceeds from a post-translocation (POST) complex to a pre-translocation (PRE) complex, thus giving elongation factor G a second chance to translocate the tRNAs correctly. Binds to ribosomes in a GTP-dependent manner. This Synechococcus sp. (strain CC9311) protein is Elongation factor 4.